Here is a 353-residue protein sequence, read N- to C-terminus: Endophilin-A1 (353 aa).

Residues 1-21 are membrane-binding amphipathic helix; that stretch reads MSVAGLKKQFHKATQKVSEKV. The interval 1-27 is disordered; sequence MSVAGLKKQFHKATQKVSEKVGGAEGT. The tract at residues 1–125 is binds and tubulates liposomes; that stretch reads MSVAGLKKQF…DVGEAMKELS (125 aa). The region spanning 18–249 is the BAR domain; sequence SEKVGGAEGT…LEDRIKEASS (232 aa). The tract at residues 60-87 is required for dimerization upon membrane association; it reads PNPASRAKLSMINTMSKIRGQEKGPGYP. Residues 181-201 are a coiled coil; sequence EELRQALEKFDESKEIAESSM. The segment covering 243-257 has biased composition (basic and acidic residues); the sequence is RIKEASSQPKREYQP. Positions 243-290 are disordered; that stretch reads RIKEASSQPKREYQPKPRMSLDFTSGGDNTQHNGGISHATTPKPAGAH. A compositionally biased stretch (polar residues) spans 264–282; the sequence is DFTSGGDNTQHNGGISHAT. In terms of domain architecture, SH3 spans 291–350; that stretch reads MDQPCCRALYDFEPENEGELGFKEGDIITLTNQIDENWYEGMLHGQSGFFPINYVDILVP.

It belongs to the endophilin family. Monomer; in cytoplasm. Homodimer; when associated with membranes. Associates with MAP4K3. This interaction appears to regulate MAP4K3-mediated JNK activation. Interacts with SYNJ1 and DNM1. In terms of tissue distribution, highly expressed in brain.

Its subcellular location is the cytoplasm. The protein localises to the membrane. It is found in the early endosome. The protein resides in the presynapse. In terms of biological role, implicated in synaptic vesicle endocytosis. May recruit other proteins to membranes with high curvature. The chain is Endophilin-A1 from Gallus gallus (Chicken).